The chain runs to 226 residues: Leucyl/phenylalanyl-tRNA--protein transferase (226 aa).

This sequence belongs to the L/F-transferase family.

Its subcellular location is the cytoplasm. The enzyme catalyses N-terminal L-lysyl-[protein] + L-leucyl-tRNA(Leu) = N-terminal L-leucyl-L-lysyl-[protein] + tRNA(Leu) + H(+). It carries out the reaction N-terminal L-arginyl-[protein] + L-leucyl-tRNA(Leu) = N-terminal L-leucyl-L-arginyl-[protein] + tRNA(Leu) + H(+). The catalysed reaction is L-phenylalanyl-tRNA(Phe) + an N-terminal L-alpha-aminoacyl-[protein] = an N-terminal L-phenylalanyl-L-alpha-aminoacyl-[protein] + tRNA(Phe). Functions in the N-end rule pathway of protein degradation where it conjugates Leu, Phe and, less efficiently, Met from aminoacyl-tRNAs to the N-termini of proteins containing an N-terminal arginine or lysine. This is Leucyl/phenylalanyl-tRNA--protein transferase from Pseudomonas fluorescens (strain Pf0-1).